The following is a 333-amino-acid chain: Phosphate acyltransferase (333 aa).

The protein belongs to the PlsX family. As to quaternary structure, homodimer. Probably interacts with PlsY.

It localises to the cytoplasm. It carries out the reaction a fatty acyl-[ACP] + phosphate = an acyl phosphate + holo-[ACP]. It participates in lipid metabolism; phospholipid metabolism. Catalyzes the reversible formation of acyl-phosphate (acyl-PO(4)) from acyl-[acyl-carrier-protein] (acyl-ACP). This enzyme utilizes acyl-ACP as fatty acyl donor, but not acyl-CoA. This is Phosphate acyltransferase from Helicobacter hepaticus (strain ATCC 51449 / 3B1).